Here is a 775-residue protein sequence, read N- to C-terminus: Melanoma-associated antigen D1 (775 aa).

Positions 37–330 are disordered; that stretch reads SEAPPTSQAT…PARQTPSAWQ (294 aa). A compositionally biased stretch (low complexity) spans 39 to 50; that stretch reads APPTSQATAAAS. 6 stretches are compositionally biased toward polar residues: residues 52–63, 84–100, 150–180, 223–237, 250–260, and 297–330; these read PNASPQSSQPPT, KAQN…SQAR, GQNT…NQPK, AQTS…NVES, NNLNVEENSNG, and LAWQ…SAWQ. 19 consecutive repeat copies span residues 293–298, 299–304, 305–310, 329–334, 335–340, 341–346, 347–352, 353–358, 359–364, 365–370, 371–376, 377–382, 383–388, 389–394, 395–400, 401–406, 407–412, 413–418, and 419–424. A 22 X 6 AA tandem repeats of W-[PQ]-X-P-X-X region spans residues 293-441; sequence WQTPLAWQNP…IPPDWQNLRP (149 aa). Residues 374-407 are disordered; it reads TPGWQSPPSWQAPPSWQSPQDWQGPPDWQLPPDW. Low complexity predominate over residues 375 to 406; the sequence is PGWQSPPSWQAPPSWQSPQDWQGPPDWQLPPD. The 20; approximate repeat unit spans residues 425–429; that stretch reads WIPAD. Tandem repeats lie at residues 430-435 and 436-441. Over residues 437–452 the composition is skewed to low complexity; sequence QNLRPSPNLRSSPNSR. The segment at 437 to 463 is disordered; it reads QNLRPSPNLRSSPNSRASQNQGPPQPR. The 199-residue stretch at 468–666 folds into the MAGE domain; that stretch reads LQERANKLVK…RDWTAQFMEA (199 aa).

Interacts with DLX5, DLX7 and MSX2 and forms homomultimers. Interacts with UNC5A. Interacts with TRIM28 and PJA1. Interacts with NGFR/p75NTR and RORA. Ubiquitous and in the seminiferous tubules expressed in Sertoli cells but not in germ cells. Expression decreases in all tissues with increased age and is detectable only in brain cortex and lung.

The protein localises to the cytoplasm. It localises to the cell membrane. The protein resides in the nucleus. In terms of biological role, involved in the apoptotic response after nerve growth factor (NGF) binding in neuronal cells. Inhibits cell cycle progression, and facilitates NGFR-mediated apoptosis. May act as a regulator of the function of DLX family members. May enhance ubiquitin ligase activity of RING-type zinc finger-containing E3 ubiquitin-protein ligases. Proposed to act through recruitment and/or stabilization of the Ubl-conjugating enzyme (E2) at the E3:substrate complex. Plays a role in the circadian rhythm regulation. May act as RORA co-regulator, modulating the expression of core clock genes such as BMAL1 and NFIL3, induced, or NR1D1, repressed. This Rattus norvegicus (Rat) protein is Melanoma-associated antigen D1 (Maged1).